Consider the following 122-residue polypeptide: Large ribosomal subunit protein uL14 (122 aa).

It belongs to the universal ribosomal protein uL14 family. As to quaternary structure, part of the 50S ribosomal subunit. Forms a cluster with proteins L3 and L19. In the 70S ribosome, L14 and L19 interact and together make contacts with the 16S rRNA in bridges B5 and B8.

Binds to 23S rRNA. Forms part of two intersubunit bridges in the 70S ribosome. This is Large ribosomal subunit protein uL14 from Nitrosococcus oceani (strain ATCC 19707 / BCRC 17464 / JCM 30415 / NCIMB 11848 / C-107).